A 1043-amino-acid chain; its full sequence is F-box DNA helicase 1 (1043 aa).

The segment at 30-56 (QRWTNRDPNHGLYPKPRTKRGSRGQGS) is disordered. The short motif at 57–64 (QRCIPEFF) is the PIP-box element. A disordered region spans residues 101–191 (CALPQEGSAG…QDAGDVGPDP (91 aa)). S124 carries the phosphoserine modification. An F-box domain is found at 138-184 (SRWDGVSKKAPRHHLSVPCTRPREARQEAEDSTSRLSAESGETDQDA). Residues 158–170 (RPREARQEAEDST) are compositionally biased toward basic and acidic residues. One can recognise a UvrD-like helicase ATP-binding domain in the interval 442-705 (THEQQLILNH…FYLTQSFRFG (264 aa)). 463 to 470 (AFAGTGKT) is a binding site for ATP. An APIM motif motif is present at residues 807–811 (KFIRR).

It belongs to the helicase family. UvrD subfamily. In terms of assembly, part of the SCF (SKP1-CUL1-F-box) E3 ubiquitin-protein ligase complex SCF(FBH1) composed of CUL1, SKP1, RBX1 and FBH1. Interacts with RAD51. Interacts with RPA2. Interacts (via PIP-box and RanBP2-type zinc finger) with PCNA. In terms of processing, ubiquitinated. Ubiquitination by the DCX(DTL) complex, also named CRL4(CDT2), leading to its degradation: ubiquitination takes place after its localization to DNA damage sites, possibly to facilitate the translesion synthesis (TLS) pathway.

It localises to the nucleus. The protein resides in the chromosome. The catalysed reaction is Couples ATP hydrolysis with the unwinding of duplex DNA by translocating in the 3'-5' direction.. The enzyme catalyses ATP + H2O = ADP + phosphate + H(+). The protein operates within protein modification; protein ubiquitination. In terms of biological role, 3'-5' DNA helicase and substrate-recognition component of the SCF(FBH1) E3 ubiquitin ligase complex that plays a key role in response to stalled/damaged replication forks. Involved in genome maintenance by acting as an anti-recombinogenic helicase and preventing extensive strand exchange during homologous recombination: promotes RAD51 filament dissolution from stalled forks, thereby inhibiting homologous recombination and preventing excessive recombination. Also promotes cell death and DNA double-strand breakage in response to replication stress: together with MUS81, promotes the endonucleolytic DNA cleavage following prolonged replication stress via its helicase activity, possibly to eliminate cells with excessive replication stress. Plays a major role in remodeling of stalled DNA forks by catalyzing fork regression, in which the fork reverses and the two nascent DNA strands anneal. In addition to the helicase activity, also acts as the substrate-recognition component of the SCF(FBH1) E3 ubiquitin ligase complex, a complex that mediates ubiquitination of RAD51, leading to regulate RAD51 subcellular location. The chain is F-box DNA helicase 1 from Homo sapiens (Human).